A 493-amino-acid chain; its full sequence is Neuronal pentraxin receptor (493 aa).

At 1–2 (MK) the chain is on the cytoplasmic side. The chain crosses the membrane as a helical; Signal-anchor for type II membrane protein span at residues 3-23 (FLAVLLAAGMLAFLGAVICII). Residues 24–493 (ASVPLAASPA…FDVCKGRAKA (470 aa)) are Extracellular-facing. A disordered region spans residues 37-72 (PGGTDNASAASAAGGSGPQRSLSALHSAGGSAGPSV). Asparagine 42 is a glycosylation site (N-linked (GlcNAc...) asparagine). Residues 57-72 (SLSALHSAGGSAGPSV) are compositionally biased toward low complexity. Asparagine 211 carries N-linked (GlcNAc...) asparagine glycosylation. In terms of domain architecture, Pentraxin (PTX) spans 285-487 (DAFKVSIPIR…GAKKAAFDVC (203 aa)). A disulfide bond links cysteine 315 and cysteine 376. Positions 340, 418, 419, 420, and 430 each coordinate Ca(2+). N-linked (GlcNAc...) asparagine glycosylation is present at asparagine 456.

As to quaternary structure, heteropentamer with NPTX1 and/or NPTX2. Also binds taipoxin-associated calcium-binding protein 49 (TCBP49/RCN2). Interacts with KLHL2. Ca(2+) serves as cofactor. Ubiquitinated by a cullin-RING-based BCR (BTB-CUL3-RBX1) E3 ubiquitin-protein ligase complex containing KLHL2.

It is found in the membrane. Its function is as follows. May be involved in mediating uptake of synaptic material during synapse remodeling or in mediating the synaptic clustering of AMPA glutamate receptors at a subset of excitatory synapses. In Mus musculus (Mouse), this protein is Neuronal pentraxin receptor (Nptxr).